Consider the following 138-residue polypeptide: Acidic phospholipase A2 MVL-PLA2 (138 aa).

A signal peptide spans 1–16 (MRTLWIVAVCLMGVEG). Disulfide bonds link C42–C131, C44–C60, C59–C111, C65–C138, C66–C104, C73–C97, and C91–C102. 3 residues coordinate Ca(2+): Y43, G45, and G47. Residue H63 is part of the active site. Residue D64 participates in Ca(2+) binding. Residues 86–88 (NGD) carry the May inhibit integrin function (Atypical cell attachment site) motif. The active site involves D105.

This sequence belongs to the phospholipase A2 family. Group II subfamily. D49 sub-subfamily. The cofactor is Ca(2+). As to expression, expressed by the venom gland.

The protein localises to the secreted. The enzyme catalyses a 1,2-diacyl-sn-glycero-3-phosphocholine + H2O = a 1-acyl-sn-glycero-3-phosphocholine + a fatty acid + H(+). Functionally, snake venom phospholipase A2 (PLA2) that displays an inhibitory effect, independent from its catalytic activity, on tumor cell adhesion and migration. This effect is mediated via specific inhibition of integrins alpha-5/beta-1 (ITGA5/ITGB1), alpha-v/beta-3 (ITGAV/ITGB3) and alpha-v/beta-6 (ITGAV/ITGB6). PLA2 catalyzes the calcium-dependent hydrolysis of the 2-acyl groups in 3-sn-phosphoglycerides. The polypeptide is Acidic phospholipase A2 MVL-PLA2 (Macrovipera lebetina transmediterranea (Blunt-nosed viper)).